A 346-amino-acid polypeptide reads, in one-letter code: Protein RecA (346 aa).

Residue Gly64–Thr71 participates in ATP binding.

It belongs to the RecA family.

Its subcellular location is the cytoplasm. Its function is as follows. Can catalyze the hydrolysis of ATP in the presence of single-stranded DNA, the ATP-dependent uptake of single-stranded DNA by duplex DNA, and the ATP-dependent hybridization of homologous single-stranded DNAs. It interacts with LexA causing its activation and leading to its autocatalytic cleavage. The sequence is that of Protein RecA from Bacillus pumilus (strain SAFR-032).